Consider the following 823-residue polypeptide: Apoptosis-resistant E3 ubiquitin protein ligase 1 (823 aa).

The stretch at 64 to 158 is one Filamin repeat; that stretch reads WDWKDPYEVG…VAYSPYYKIF (95 aa). The segment at 315–345 is disordered; the sequence is PPMHMSSSQRRPSTAIEEDDEDSPSECHTPE. The interval 483 to 789 is interaction with SOCS2; that stretch reads SISDWSKNFE…THSTLPTAHT (307 aa). Positions 483-823 constitute an HECT domain; the sequence is SISDWSKNFE…SEGCEGFGML (341 aa). Residue C790 is the Glycyl thioester intermediate of the active site.

As to quaternary structure, interacts with SOCS2. Interacts (via HECT domain) with HTRA2, DIABLO/SMAC and SEPTIN4; in the cytoplasm following induction of apoptosis. Autoubiquitinated in vitro in the presence of E2 enzyme UBE2D1/UBCH5A. Detected in brain, testis, heart, liver, lung and kidney with very low levels in skeletal muscle and spleen.

It carries out the reaction S-ubiquitinyl-[E2 ubiquitin-conjugating enzyme]-L-cysteine + [acceptor protein]-L-lysine = [E2 ubiquitin-conjugating enzyme]-L-cysteine + N(6)-ubiquitinyl-[acceptor protein]-L-lysine.. Its pathway is protein modification; protein ubiquitination. E3 ubiquitin-protein ligase that catalyzes 'Lys-11'- or 'Lys-33'-linked polyubiquitin chains, with some preference for 'Lys-33' linkages. E3 ubiquitin-protein ligases accept ubiquitin from an E2 ubiquitin-conjugating enzyme in the form of a thioester and then directly transfers the ubiquitin to targeted substrates. Ubiquitinates SEPTIN4, DIABLO/SMAC and HTRA2 in vitro. Modulates pulmonary inflammation by targeting SOCS2 for ubiquitination and subsequent degradation by the proteasome. This chain is Apoptosis-resistant E3 ubiquitin protein ligase 1 (Arel1), found in Mus musculus (Mouse).